We begin with the raw amino-acid sequence, 89 residues long: Small ribosomal subunit protein uS15 (89 aa).

Over residues 1-10 (MAVTTDQKSQ) the composition is skewed to polar residues. Positions 1 to 22 (MAVTTDQKSQVMRDYQRAAGDT) are disordered.

The protein belongs to the universal ribosomal protein uS15 family. As to quaternary structure, part of the 30S ribosomal subunit. Forms a bridge to the 50S subunit in the 70S ribosome, contacting the 23S rRNA.

Functionally, one of the primary rRNA binding proteins, it binds directly to 16S rRNA where it helps nucleate assembly of the platform of the 30S subunit by binding and bridging several RNA helices of the 16S rRNA. Forms an intersubunit bridge (bridge B4) with the 23S rRNA of the 50S subunit in the ribosome. The chain is Small ribosomal subunit protein uS15 from Nitrosomonas europaea (strain ATCC 19718 / CIP 103999 / KCTC 2705 / NBRC 14298).